The primary structure comprises 100 residues: Enhancer of yellow 2 transcription factor (100 aa).

It belongs to the ENY2 family. As to quaternary structure, component of the nuclear pore complex (NPC)-associated AMEX complex (anchoring and mRNA export complex), composed of at least e(y)2 and xmas-2. Component of the SAGA transcription coactivator-HAT complexes, at least composed of Ada2b, e(y)2, Pcaf/Gcn5, Taf10 and Nipped-A/Trrap. Within the SAGA complex, e(y)2, Sgf11, and not/nonstop form an additional subcomplex of SAGA called the DUB module (deubiquitination module). Component of the THO complex, composed of at least e(y)2, HPR1, THO2, THOC5, THOC6 and THOC7. Interacts with e(y)1. Interacts with su(Hw) (via zinc fingers). Interacts with xmas-2; required for localization to the nuclear periphery. Interacts with the nuclear pore complex (NPC).

It localises to the nucleus. The protein resides in the nucleoplasm. It is found in the cytoplasm. Functionally, involved in mRNA export coupled transcription activation by association with both the AMEX and the SAGA complexes. The SAGA complex is a multiprotein complex that activates transcription by remodeling chromatin and mediating histone acetylation and deubiquitination. Within the SAGA complex, participates in a subcomplex that specifically deubiquitinates histone H2B. The SAGA complex is recruited to specific gene promoters by activators, where it is required for transcription. Required for nuclear receptor-mediated transactivation. Involved in transcription elongation by recruiting the THO complex onto nascent mRNA. The AMEX complex functions in docking export-competent ribonucleoprotein particles (mRNPs) to the nuclear entrance of the nuclear pore complex (nuclear basket). AMEX participates in mRNA export and accurate chromatin positioning in the nucleus by tethering genes to the nuclear periphery. The sequence is that of Enhancer of yellow 2 transcription factor from Drosophila ananassae (Fruit fly).